The primary structure comprises 1443 residues: ARF guanine-nucleotide exchange factor GNL1 (1443 aa).

The SEC7 domain maps to 554-743; it reads FVRKVKHIKK…SEIYHSIRHS (190 aa). The active site involves glutamate 658. 2 disordered regions span residues 917-949 and 1424-1443; these read DDPE…AMPR and DQFQ…GNEV. Positions 939-949 are enriched in polar residues; the sequence is VSQSQPSAMPR. Basic and acidic residues predominate over residues 1425–1435; it reads QFQRRNAKPED.

In terms of assembly, homodimer.

It is found in the cytoplasm. The protein localises to the cytosol. Its subcellular location is the golgi apparatus membrane. Functionally, activates the ARF proteins by exchanging bound GDP for free GTP. Plays a role in vesicular protein sorting. Acts as the major regulator of retrograde Golgi to endoplasmic reticulum trafficking but is also involved in the endocytosis process. Could function redundantly with GNOM. Regulates vesicle trafficking required for the coordinated polar localization of auxin efflux carriers which in turn determines the direction of auxin flow. Mediates the endocytosis of PIN2 from plasma membrane to endosomal compartments. Required for maintenance of endoplasmic reticulum morphology. The chain is ARF guanine-nucleotide exchange factor GNL1 (GNL1) from Arabidopsis thaliana (Mouse-ear cress).